The primary structure comprises 344 residues: Phosphoribosylformylglycinamidine cyclo-ligase (344 aa).

The protein belongs to the AIR synthase family.

The protein resides in the cytoplasm. It carries out the reaction 2-formamido-N(1)-(5-O-phospho-beta-D-ribosyl)acetamidine + ATP = 5-amino-1-(5-phospho-beta-D-ribosyl)imidazole + ADP + phosphate + H(+). It participates in purine metabolism; IMP biosynthesis via de novo pathway; 5-amino-1-(5-phospho-D-ribosyl)imidazole from N(2)-formyl-N(1)-(5-phospho-D-ribosyl)glycinamide: step 2/2. This chain is Phosphoribosylformylglycinamidine cyclo-ligase, found in Haemophilus influenzae (strain PittEE).